Here is a 472-residue protein sequence, read N- to C-terminus: Methanethiol oxidase (472 aa).

Ala2 bears the N-acetylalanine mark. 3 positions are modified to phosphoserine: Ser111, Ser371, and Ser467.

It belongs to the selenium-binding protein family. As to quaternary structure, interacts with USP33. Post-translationally, phosphorylated. In terms of processing, the N-terminus is blocked. Widely expressed. Highly expressed in liver, lung, colon, prostate, kidney and pancreas. In brain, present both in neurons and glia (at protein level). Down-regulated in lung adenocarcinoma, colorectal carcinoma and ovarian cancer. Two-fold up-regulated in brain and blood from schizophrenia patients.

Its subcellular location is the nucleus. The protein resides in the cytoplasm. It is found in the cytosol. It localises to the membrane. It catalyses the reaction methanethiol + O2 + H2O = hydrogen sulfide + formaldehyde + H2O2 + H(+). It functions in the pathway organosulfur degradation. Its function is as follows. Catalyzes the oxidation of methanethiol, an organosulfur compound known to be produced in substantial amounts by gut bacteria. Selenium-binding protein which may be involved in the sensing of reactive xenobiotics in the cytoplasm. May be involved in intra-Golgi protein transport. This chain is Methanethiol oxidase (SELENBP1), found in Homo sapiens (Human).